Here is a 535-residue protein sequence, read N- to C-terminus: Alpha-1,3-mannosyl-glycoprotein 4-beta-N-acetylglucosaminyltransferase A (535 aa).

At 1–4 (MRLR) the chain is on the cytoplasmic side. The chain crosses the membrane as a helical; Signal-anchor for type II membrane protein span at residues 5–27 (NGTVATALAFITSFLTLSWYTTW). A coiled-coil region spans residues 28–63 (QNGKEKLIAYQREFLALKERLRIAEHRISQRSSELN). Over 28–535 (QNGKEKLIAY…NEIHIKKATN (508 aa)) the chain is Lumenal. N-linked (GlcNAc...) asparagine glycosylation is found at N77 and N458. Residue S474 is modified to Phosphoserine.

Belongs to the glycosyltransferase 54 family. A divalent metal cation serves as cofactor. Post-translationally, N-glycosylated.

The protein localises to the golgi apparatus membrane. It localises to the secreted. The enzyme catalyses N(4)-{beta-D-GlcNAc-(1-&gt;2)-alpha-D-Man-(1-&gt;3)-[beta-D-GlcNAc-(1-&gt;2)-alpha-D-Man-(1-&gt;6)]-beta-D-Man-(1-&gt;4)-beta-D-GlcNAc-(1-&gt;4)-beta-D-GlcNAc}-L-asparaginyl-[protein] + UDP-N-acetyl-alpha-D-glucosamine = N(4)-{beta-D-GlcNAc-(1-&gt;2)-[beta-D-GlcNAc-(1-&gt;4)]-alpha-D-Man-(1-&gt;3)-[beta-D-GlcNAc-(1-&gt;2)-alpha-D-Man-(1-&gt;6)]-beta-D-Man-(1-&gt;4)-beta-D-GlcNAc-(1-&gt;4)-beta-D-GlcNAc}-L-asparaginyl-[protein] + UDP + H(+). The catalysed reaction is an N(4)-{beta-D-GlcNAc-(1-&gt;2)-alpha-D-Man-(1-&gt;3)-[alpha-D-Man-(1-&gt;6)]-beta-D-Man-(1-&gt;4)-beta-D-GlcNAc-(1-&gt;4)-beta-D-GlcNAc}-L-asparaginyl-[protein] + UDP-N-acetyl-alpha-D-glucosamine = an N(4)-{beta-D-GlcNAc-(1-&gt;2)-[beta-D-GlcNAc-(1-&gt;4)]-alpha-D-Man-(1-&gt;3)-[alpha-D-Man-(1-&gt;6)]-beta-D-Man-(1-&gt;4)-beta-D-GlcNAc-(1-&gt;4)-beta-D-GlcNAc}-L-asparaginyl-[protein] + UDP + H(+). It carries out the reaction an N(4)-{beta-D-GlcNAc-(1-&gt;2)-alpha-D-Man-(1-&gt;3)-[beta-D-GlcNAc-(1-&gt;2)-[beta-D-GlcNAc-(1-&gt;6)]-alpha-D-Man-(1-&gt;6)]-beta-D-Man-(1-&gt;4)-beta-D-GlcNAc-(1-&gt;4)-beta-D-GlcNAc}-L-asparaginyl-[protein] + UDP-N-acetyl-alpha-D-glucosamine = an N(4)-{beta-D-GlcNAc-(1-&gt;2)-[beta-D-GlcNAc-(1-&gt;4)]-alpha-D-Man-(1-&gt;3)-[beta-D-GlcNAc-(1-&gt;2)-[beta-D-GlcNAc-(1-&gt;6)]-alpha-D-Man-(1-&gt;6)]-beta-D-Man-(1-&gt;4)-beta-D-GlcNAc-(1-&gt;4)-beta-D-GlcNAc}-L-asparaginyl-[protein] + UDP + H(+). It catalyses the reaction an N(4)-{beta-D-GlcNAc-(1-&gt;2)-alpha-D-Man-(1-&gt;3)-[beta-D-GlcNAc-(1-&gt;2)-alpha-D-Man-(1-&gt;6)]-beta-D-Man-(1-&gt;4)-beta-D-GlcNAc-(1-&gt;4)-[alpha-L-Fuc-(1-&gt;6)]-beta-D-GlcNAc}-L-asparaginyl-[protein] + UDP-N-acetyl-alpha-D-glucosamine = N(4)-{beta-D-GlcNAc-(1-&gt;2)-[beta-D-GlcNAc-(1-&gt;4)]-alpha-D-Man-(1-&gt;3)-[beta-D-GlcNAc-(1-&gt;2)-alpha-D-Man-(1-&gt;6)]-beta-D-Man-(1-&gt;4)-beta-D-GlcNAc-(1-&gt;4)-[alpha-L-Fuc-(1-&gt;6)]-beta-D-GlcNAc}-asparaginyl-[protein] + UDP + H(+). The enzyme catalyses an N(4)-{beta-D-GlcNAc-(1-&gt;2)-alpha-D-Man-(1-&gt;3)-[beta-D-Gal-(1-&gt;4)-beta-D-GlcNAc-(1-&gt;2)-alpha-D-Man-(1-&gt;6)]-beta-D-Man-(1-&gt;4)-beta-D-GlcNAc-(1-&gt;4)-beta-D-GlcNAc}-L-asparaginyl-[protein] + UDP-N-acetyl-alpha-D-glucosamine = an N(4)-{beta-D-GlcNAc-(1-&gt;2)-[beta-D-GlcNAc-(1-&gt;4)]-alpha-D-Man-(1-&gt;3)-[beta-D-Gal-(1-&gt;4)-beta-D-GlcNAc-(1-&gt;2)-alpha-D-Man-(1-&gt;6)]-beta-D-Man-(1-&gt;4)-beta-D-GlcNAc-(1-&gt;4)-beta-D-GlcNAc}-L-asparaginyl-[protein] + UDP + H(+). The catalysed reaction is N(4)-{beta-D-GlcNAc-(1-&gt;2)-alpha-D-Man-(1-&gt;3)-[alpha-D-Man-(1-&gt;3)-{alpha-D-Man-(1-&gt;6)}-alpha-D-Man-(1-&gt;6)]-beta-D-Man-(1-&gt;4)-beta-D-GlcNAc-(1-&gt;4)-beta-D-GlcNAc}-asparaginyl-[protein] + UDP-N-acetyl-alpha-D-glucosamine = N(4)-{beta-D-GlcNAc-(1-&gt;2)-[beta-D-GlcNAc-(1-&gt;4)]-alpha-D-Man-(1-&gt;3)-[alpha-D-Man-(1-&gt;3)-{alpha-D-Man-(1-&gt;6)}-alpha-D-Man-(1-&gt;6)]-beta-D-Man-(1-&gt;4)-beta-D-GlcNAc-(1-&gt;4)-beta-D-GlcNAc}-asparaginyl-[protein] + UDP + H(+). It carries out the reaction N(4)-{beta-D-GlcNAc-(1-&gt;2)-alpha-D-Man-(1-&gt;3)-beta-D-Man-(1-&gt;4)-beta-D-GlcNAc-(1-&gt;4)-beta-D-GlcNAc}-asparaginyl-[protein] + UDP-N-acetyl-alpha-D-glucosamine = N(4)-{beta-D-GlcNAc-(1-&gt;2)-[beta-D-GlcNAc-(1-&gt;4)]-alpha-D-Man-(1-&gt;3)-beta-D-Man-(1-&gt;4)-beta-D-GlcNAc-(1-&gt;4)-beta-D-GlcNAc}-asparaginyl-[protein] + UDP + H(+). It functions in the pathway protein modification; protein glycosylation. Inhibited by UDP. Glycosyltransferase that catalyze the transfer of GlcNAc from UDP-GlcNAc to the GlcNAcbeta1-2Manalpha1-3 arm of the core structure of N-linked glycans through a beta1-4 linkage and participates in the production of tri- and tetra-antennary N-linked sugar chains. Involved in glucose transport by mediating SLC2A2/GLUT2 glycosylation, thereby controlling cell-surface expression of SLC2A2 in pancreatic beta cells. The protein is Alpha-1,3-mannosyl-glycoprotein 4-beta-N-acetylglucosaminyltransferase A of Pongo abelii (Sumatran orangutan).